The chain runs to 757 residues: Double zinc ribbon and ankyrin repeat-containing protein 1 (757 aa).

2 DZANK-type zinc fingers span residues 230-290 and 359-407; these read CAHC…VVCE and CSRC…GSCG. ANK repeat units follow at residues 631 to 662 and 666 to 695; these read ENRL…DPNC and QGRP…DIDQ.

In terms of assembly, interacts with NINL. Associates with DYNC1H1 and multiple dynein intermediate and light chains as well as actin-binding proteins. In terms of tissue distribution, expressed in retina.

It localises to the cell projection. It is found in the cilium. Involved in vesicle transport in photoreceptor cells. The polypeptide is Double zinc ribbon and ankyrin repeat-containing protein 1 (Rattus norvegicus (Rat)).